The following is a 184-amino-acid chain: ATP synthase subunit b (184 aa).

Residues I25–V45 form a helical membrane-spanning segment.

This sequence belongs to the ATPase B chain family. F-type ATPases have 2 components, F(1) - the catalytic core - and F(0) - the membrane proton channel. F(1) has five subunits: alpha(3), beta(3), gamma(1), delta(1), epsilon(1). F(0) has three main subunits: a(1), b(2) and c(10-14). The alpha and beta chains form an alternating ring which encloses part of the gamma chain. F(1) is attached to F(0) by a central stalk formed by the gamma and epsilon chains, while a peripheral stalk is formed by the delta and b chains.

The protein localises to the cell membrane. In terms of biological role, f(1)F(0) ATP synthase produces ATP from ADP in the presence of a proton or sodium gradient. F-type ATPases consist of two structural domains, F(1) containing the extramembraneous catalytic core and F(0) containing the membrane proton channel, linked together by a central stalk and a peripheral stalk. During catalysis, ATP synthesis in the catalytic domain of F(1) is coupled via a rotary mechanism of the central stalk subunits to proton translocation. Functionally, component of the F(0) channel, it forms part of the peripheral stalk, linking F(1) to F(0). This Mycoplasma mobile (strain ATCC 43663 / 163K / NCTC 11711) (Mesomycoplasma mobile) protein is ATP synthase subunit b.